Consider the following 159-residue polypeptide: Ribosomal RNA large subunit methyltransferase H (159 aa).

S-adenosyl-L-methionine-binding positions include Leu-76, Gly-108, and 127-132 (FGLLTL).

The protein belongs to the RNA methyltransferase RlmH family. As to quaternary structure, homodimer.

It localises to the cytoplasm. The enzyme catalyses pseudouridine(1915) in 23S rRNA + S-adenosyl-L-methionine = N(3)-methylpseudouridine(1915) in 23S rRNA + S-adenosyl-L-homocysteine + H(+). Functionally, specifically methylates the pseudouridine at position 1915 (m3Psi1915) in 23S rRNA. This chain is Ribosomal RNA large subunit methyltransferase H, found in Streptococcus pyogenes serotype M18 (strain MGAS8232).